Consider the following 180-residue polypeptide: Crossover junction endodeoxyribonuclease RuvC (180 aa).

Active-site residues include Asp-7, Glu-66, and Asp-138. Residues Asp-7, Glu-66, and Asp-138 each contribute to the Mg(2+) site.

It belongs to the RuvC family. As to quaternary structure, homodimer which binds Holliday junction (HJ) DNA. The HJ becomes 2-fold symmetrical on binding to RuvC with unstacked arms; it has a different conformation from HJ DNA in complex with RuvA. In the full resolvosome a probable DNA-RuvA(4)-RuvB(12)-RuvC(2) complex forms which resolves the HJ. Mg(2+) is required as a cofactor.

Its subcellular location is the cytoplasm. It catalyses the reaction Endonucleolytic cleavage at a junction such as a reciprocal single-stranded crossover between two homologous DNA duplexes (Holliday junction).. Its function is as follows. The RuvA-RuvB-RuvC complex processes Holliday junction (HJ) DNA during genetic recombination and DNA repair. Endonuclease that resolves HJ intermediates. Cleaves cruciform DNA by making single-stranded nicks across the HJ at symmetrical positions within the homologous arms, yielding a 5'-phosphate and a 3'-hydroxyl group; requires a central core of homology in the junction. The consensus cleavage sequence is 5'-(A/T)TT(C/G)-3'. Cleavage occurs on the 3'-side of the TT dinucleotide at the point of strand exchange. HJ branch migration catalyzed by RuvA-RuvB allows RuvC to scan DNA until it finds its consensus sequence, where it cleaves and resolves the cruciform DNA. This Burkholderia pseudomallei (strain 1710b) protein is Crossover junction endodeoxyribonuclease RuvC.